A 300-amino-acid chain; its full sequence is MAQKVEAQGGIGGDVWDDGAHDGVRKVHVGQGLDGVSFINVVYENGSQEVVGGEHGKKSLIGIETFEVDADDYIVAVQVTYDKIFGYDSDIITSITFSTFKGKTSPPYGLDTENKFVLKEKNGGKLVGFHGRAGEILYALGAYFTTTTTPLTPAKKLPAVGGDEGTAWDDGAFDGVKKVYIGQAQDGISAVKFVYDKGAEDIVGDEHGNDTLLGFEEFQLDYPSEYITAVEGTYDKIFGFETEVINMLRFKTNKKTSPPFGIEAGTAFELKEEGCKIVGFHGKVSAVLHQFGVHILPVTN.

Position 2 is an N-acetylalanine (Ala2). 2 Jacalin-type lectin domains span residues Ala2–Thr146 and Ala154–Pro297.

Belongs to the jacalin lectin family.

Functionally, involved in gametophytic development. The sequence is that of Jacalin-related lectin 32 (JAL32) from Arabidopsis thaliana (Mouse-ear cress).